A 290-amino-acid chain; its full sequence is MFHFSIGTVLISICWLAQWMEAKSQRIDPDAENELWDSIKHTKVQNIVEKNAIGEINSPPTDGTPYLKVVCISDTHEQLHNVTVPDGDVLIHAGDFTNNGKREELIKFNEEMTRFPHKYKLVVAGNHELGFDHDENQGERQDADKGLGTEDGYNILTNVTYLQDKGVTIDGVTFFGSSYHPLRGFPFYRNRAEQLAECWKAVPNDTNVLITHTPPLGYLDQFGDERWGCRDLLKTVERIQPAYHIFGHVHEQHGVLSNGNTTFINAAQCNKGNQIQTRPIVFYIPKKTLS.

A signal peptide spans 1 to 22 (MFHFSIGTVLISICWLAQWMEA). Asparagine 204 carries an N-linked (GlcNAc...) asparagine glycan.

The protein belongs to the UPF0046 family.

The protein is UPF0046 protein K07C11.7 of Caenorhabditis elegans.